The chain runs to 228 residues: Claudin-10 (228 aa).

The chain crosses the membrane as a helical span at residues 1-21 (MASTASEIIAFMVSISGWVLV). Topologically, residues 22–80 (SSTLPTDYWKVSTIDGTVITTATYWANLWKACVTDSTGVSNCKDFPSMLALDGYIQACR) are extracellular. A helical membrane pass occupies residues 81–101 (GLMIAAVSLGFFGSIFALFGM). The Cytoplasmic segment spans residues 102-115 (KCTKVGGSDKAKAK). The chain crosses the membrane as a helical span at residues 116 to 136 (IACLAGIVFILSGLCSMTGCS). The Extracellular portion of the chain corresponds to 137–160 (LYANKITTEFFDPLFVEQKYELGA). Residues 161–181 (ALFIGWAGASLCIIGGVIFCF) form a helical membrane-spanning segment. The Cytoplasmic segment spans residues 182 to 228 (SISDNNKTPRYTYNGATSVMSSRTKYHGGEDFKTTNPSKQFDKNAYV).

Belongs to the claudin family. In terms of assembly, can form homodimers both in trans (interaction between CLDN10 molecules in opposing membranes) and in cis (interaction between CLDN10 molecules within one membrane). Interacts with CLDN19. As to expression, expressed in the kidney, eccrine sweat glands and in all layers of the epidermis. In the kidney, it is detected in the thick ascending limb of Henle's loop (TAL). In the sweat glands, it is expressed in cells from secretory portions, corresponding to the clear cells.

The protein resides in the cell junction. It is found in the tight junction. Its subcellular location is the cell membrane. The catalysed reaction is Na(+)(in) = Na(+)(out). It catalyses the reaction Li(+)(in) = Li(+)(out). The enzyme catalyses K(+)(in) = K(+)(out). It carries out the reaction Rb(+)(in) = Rb(+)(out). The catalysed reaction is Cs(+)(in) = Cs(+)(out). It catalyses the reaction NH4(+)(in) = NH4(+)(out). The enzyme catalyses methylamine(out) = methylamine(in). It carries out the reaction Mg(2+)(in) = Mg(2+)(out). The catalysed reaction is Ca(2+)(in) = Ca(2+)(out). It catalyses the reaction Sr(2+)(in) = Sr(2+)(out). The enzyme catalyses chloride(in) = chloride(out). It carries out the reaction nitrate(in) = nitrate(out). Functionally, forms paracellular channels: polymerizes in tight junction strands with cation- and anion-selective channels through the strands, conveying epithelial permeability in a process known as paracellular tight junction permeability. Forms cation-selective paracellular channels. In sweat glands and in the thick ascending limb (TAL) of Henle's loop in kidney, it controls paracellular sodium permeability which is essential for proper sweat production and renal function. In terms of biological role, forms anion-selective paracellular channels. In renal proximal tubules, it conveys selective chloride over hydrogencarbonate anion permeability which is required for renal chloride reabsorption and salt homeostasis. The chain is Claudin-10 from Homo sapiens (Human).